A 120-amino-acid chain; its full sequence is Large ribosomal subunit protein uL18 (120 aa).

Belongs to the universal ribosomal protein uL18 family. Part of the 50S ribosomal subunit; part of the 5S rRNA/L5/L18/L25 subcomplex. Contacts the 5S and 23S rRNAs.

Functionally, this is one of the proteins that bind and probably mediate the attachment of the 5S RNA into the large ribosomal subunit, where it forms part of the central protuberance. This chain is Large ribosomal subunit protein uL18, found in Xanthobacter autotrophicus (strain ATCC BAA-1158 / Py2).